Consider the following 401-residue polypeptide: Secreted LysM effector Blys8 (401 aa).

The first 19 residues, 1–19 (MRTLAIFFIGAAVAAHVSP), serve as a signal peptide directing secretion. Residues 42–89 (TYYDEAYDKSYTCDDLLSAWVISKQDFESWNPAVGSDCKLVLGHSYCV) form the LysM 1 domain. Positions 98–136 (STTTTTTTSTTTKTTTKTTTTTTAAPKPTSSAPSGPSPT) are enriched in low complexity. A disordered region spans residues 98 to 137 (STTTTTTTSTTTKTTTKTTTTTTAAPKPTSSAPSGPSPTQ). Positions 146-193 (AYYFVKAGDTCDKISQMYGTFSTAQFIEWNPAVGSSCTGLWAGYYYCV) constitute a LysM 2 domain. The segment at 201–223 (SRTSTAGPTSTKPANGVTTPQPT) is disordered. The LysM 3 domain maps to 233–279 (QFVYVQPGDQCGTVASRAGVSLSDFLQWNPSTGKDCSGLWANAYACV).

The protein belongs to the secreted LysM effector family.

In terms of biological role, might have a role in sequestration of chitin oligosaccharides (breakdown products of fungal cell walls that are released during invasion and act as triggers of host immunity) to dampen host defense. This is Secreted LysM effector Blys8 from Beauveria bassiana (strain ARSEF 2860) (White muscardine disease fungus).